Consider the following 299-residue polypeptide: uncharacterized protein (299 aa).

In terms of domain architecture, HTH lysR-type spans 1 to 59; that stretch reads MDKIHAMQLFIKVAELESFSRAADFFALPKGSVSRQIQALEHQLGTQLLQRTTRRVKLT. A DNA-binding region (H-T-H motif) is located at residues 19-38; that stretch reads FSRAADFFALPKGSVSRQIQ.

This sequence belongs to the LysR transcriptional regulatory family.

This is an uncharacterized protein from Escherichia coli (strain K12).